Reading from the N-terminus, the 930-residue chain is Isoleucine--tRNA ligase (930 aa).

Positions 57-67 (PYANGNIHVGH) match the 'HIGH' region motif. Glutamate 554 lines the L-isoleucyl-5'-AMP pocket. The 'KMSKS' region motif lies at 595 to 599 (KMSKS). Lysine 598 provides a ligand contact to ATP. Zn(2+)-binding residues include cysteine 888, cysteine 891, cysteine 908, and cysteine 911.

This sequence belongs to the class-I aminoacyl-tRNA synthetase family. IleS type 1 subfamily. In terms of assembly, monomer. Requires Zn(2+) as cofactor.

It is found in the cytoplasm. It catalyses the reaction tRNA(Ile) + L-isoleucine + ATP = L-isoleucyl-tRNA(Ile) + AMP + diphosphate. Catalyzes the attachment of isoleucine to tRNA(Ile). As IleRS can inadvertently accommodate and process structurally similar amino acids such as valine, to avoid such errors it has two additional distinct tRNA(Ile)-dependent editing activities. One activity is designated as 'pretransfer' editing and involves the hydrolysis of activated Val-AMP. The other activity is designated 'posttransfer' editing and involves deacylation of mischarged Val-tRNA(Ile). This chain is Isoleucine--tRNA ligase, found in Streptococcus pneumoniae (strain JJA).